Here is a 383-residue protein sequence, read N- to C-terminus: Succinyl-diaminopimelate desuccinylase (383 aa).

His-70 is a binding site for Zn(2+). The active site involves Asp-72. Residue Asp-103 coordinates Zn(2+). Glu-137 functions as the Proton acceptor in the catalytic mechanism. Residues Glu-138, Glu-166, and His-352 each contribute to the Zn(2+) site.

Belongs to the peptidase M20A family. DapE subfamily. In terms of assembly, homodimer. Zn(2+) is required as a cofactor. Requires Co(2+) as cofactor.

The catalysed reaction is N-succinyl-(2S,6S)-2,6-diaminopimelate + H2O = (2S,6S)-2,6-diaminopimelate + succinate. It functions in the pathway amino-acid biosynthesis; L-lysine biosynthesis via DAP pathway; LL-2,6-diaminopimelate from (S)-tetrahydrodipicolinate (succinylase route): step 3/3. Functionally, catalyzes the hydrolysis of N-succinyl-L,L-diaminopimelic acid (SDAP), forming succinate and LL-2,6-diaminopimelate (DAP), an intermediate involved in the bacterial biosynthesis of lysine and meso-diaminopimelic acid, an essential component of bacterial cell walls. The sequence is that of Succinyl-diaminopimelate desuccinylase from Hahella chejuensis (strain KCTC 2396).